Here is a 302-residue protein sequence, read N- to C-terminus: tRNA pseudouridine synthase B (302 aa).

Catalysis depends on aspartate 40, which acts as the Nucleophile.

Belongs to the pseudouridine synthase TruB family. Type 1 subfamily.

The catalysed reaction is uridine(55) in tRNA = pseudouridine(55) in tRNA. Responsible for synthesis of pseudouridine from uracil-55 in the psi GC loop of transfer RNAs. The protein is tRNA pseudouridine synthase B of Shouchella clausii (strain KSM-K16) (Alkalihalobacillus clausii).